We begin with the raw amino-acid sequence, 358 residues long: Aromatic amino acid aminotransferase (358 aa).

Position 214 is an N6-(pyridoxal phosphate)lysine (Lys214).

Belongs to the class-II pyridoxal-phosphate-dependent aminotransferase family. Homodimer. It depends on pyridoxal 5'-phosphate as a cofactor.

The catalysed reaction is an aromatic L-alpha-amino acid + 2-oxoglutarate = an aromatic oxo-acid + L-glutamate. Functionally, aminotransferase that catalyzes the conversion of aromatic amino acids and 2-oxoglutarate into corresponding aromatic oxo acids and L-glutamate. This chain is Aromatic amino acid aminotransferase, found in Rhodococcus jostii (strain RHA1).